The sequence spans 500 residues: Glycerol kinase (500 aa).

Position 12 (threonine 12) interacts with ADP. 3 residues coordinate ATP: threonine 12, threonine 13, and serine 14. Position 12 (threonine 12) interacts with sn-glycerol 3-phosphate. Arginine 16 is a binding site for ADP. Sn-glycerol 3-phosphate-binding residues include arginine 82, glutamate 83, tyrosine 135, and aspartate 245. Glycerol-binding residues include arginine 82, glutamate 83, tyrosine 135, aspartate 245, and glutamine 246. Threonine 267 and glycine 310 together coordinate ADP. 4 residues coordinate ATP: threonine 267, glycine 310, glutamine 314, and glycine 411. Glycine 411 and asparagine 415 together coordinate ADP.

Belongs to the FGGY kinase family. In terms of assembly, homotetramer and homodimer (in equilibrium).

The catalysed reaction is glycerol + ATP = sn-glycerol 3-phosphate + ADP + H(+). It functions in the pathway polyol metabolism; glycerol degradation via glycerol kinase pathway; sn-glycerol 3-phosphate from glycerol: step 1/1. With respect to regulation, activated by phosphorylation and inhibited by fructose 1,6-bisphosphate (FBP). Key enzyme in the regulation of glycerol uptake and metabolism. Catalyzes the phosphorylation of glycerol to yield sn-glycerol 3-phosphate. This Clostridium perfringens (strain 13 / Type A) protein is Glycerol kinase.